A 162-amino-acid chain; its full sequence is Large ribosomal subunit protein uL10 (162 aa).

The protein belongs to the universal ribosomal protein uL10 family. In terms of assembly, part of the ribosomal stalk of the 50S ribosomal subunit. The N-terminus interacts with L11 and the large rRNA to form the base of the stalk. The C-terminus forms an elongated spine to which L12 dimers bind in a sequential fashion forming a multimeric L10(L12)X complex.

Forms part of the ribosomal stalk, playing a central role in the interaction of the ribosome with GTP-bound translation factors. This is Large ribosomal subunit protein uL10 from Vibrio cholerae serotype O1 (strain ATCC 39541 / Classical Ogawa 395 / O395).